We begin with the raw amino-acid sequence, 344 residues long: Heat-inducible transcription repressor HrcA (344 aa).

The protein belongs to the HrcA family.

Functionally, negative regulator of class I heat shock genes (grpE-dnaK-dnaJ and groELS operons). Prevents heat-shock induction of these operons. The polypeptide is Heat-inducible transcription repressor HrcA (Streptococcus equi subsp. equi (strain 4047)).